Here is a 511-residue protein sequence, read N- to C-terminus: Alpha-amylase 1A (511 aa).

A signal peptide spans 1–15 (MKLFWLLFTIGFCWA). Position 16 is a pyrrolidone carboxylic acid (glutamine 16). 3 disulfide bridges follow: cysteine 43/cysteine 101, cysteine 85/cysteine 130, and cysteine 156/cysteine 175. Positions 115, 173, and 182 each coordinate Ca(2+). Arginine 210 is a binding site for chloride. The active-site Nucleophile is the aspartate 212. Histidine 216 provides a ligand contact to Ca(2+). Residue glutamate 248 is the Proton donor of the active site. Residues asparagine 313 and arginine 352 each contribute to the chloride site. Residue asparagine 365 is modified to Deamidated asparagine; partial. Cysteines 393 and 399 form a disulfide. Asparagine 427 is subject to Deamidated asparagine; partial; alternate. N-linked (GlcNAc...) asparagine glycosylation is present at asparagine 427. A disulfide bond links cysteine 465 and cysteine 477. At asparagine 474 the chain carries Deamidated asparagine; partial. N-linked (GlcNAc...) asparagine glycosylation is present at asparagine 476.

This sequence belongs to the glycosyl hydrolase 13 family. In terms of assembly, monomer. Ca(2+) serves as cofactor. Requires chloride as cofactor.

The protein resides in the secreted. The enzyme catalyses Endohydrolysis of (1-&gt;4)-alpha-D-glucosidic linkages in polysaccharides containing three or more (1-&gt;4)-alpha-linked D-glucose units.. Functionally, calcium-binding enzyme that initiates starch digestion in the oral cavity. Catalyzes the hydrolysis of internal (1-&gt;4)-alpha-D-glucosidic bonds, yielding a mixture of maltose, isomaltose, small amounts of glucose as well as small linear and branched oligosaccharides called dextrins. The chain is Alpha-amylase 1A from Homo sapiens (Human).